The following is a 53-amino-acid chain: Antilisterial bacteriocin subtilosin biosynthesis protein AlbB (53 aa).

Helical transmembrane passes span 8–28 (ILLYILSFIFVIGAVVYFVKS) and 30–50 (YLFTLIFIAIAILFGMRARKA).

The protein localises to the cell membrane. Involved in the production of the bacteriocin subtilosin. Required for maximal production and for optimal immunity to subtilosin. The protein is Antilisterial bacteriocin subtilosin biosynthesis protein AlbB (albB) of Bacillus subtilis (strain 168).